A 683-amino-acid chain; its full sequence is Transforming growth factor-beta-induced protein ig-h3 (683 aa).

Residues 1-23 (MALLMRLLTLALALSVGPAGTLA) form the signal peptide. Ser-37 is modified (phosphoserine). Positions 45-99 (GPNVCAVQKVIGTNKKYFTNCKQWYQRKICGKSTVISYECCPGYEKVPGEKGCPA) constitute an EMI domain. 5 disulfide bridges follow: Cys-49-Cys-85, Cys-74-Cys-339, Cys-84-Cys-97, Cys-214-Cys-317, and Cys-473-Cys-478. Position 65 is an S-cysteinyl cysteine (Cys-65). FAS1 domains follow at residues 103-236 (LSNL…DKVI), 240-371 (TNNI…DELL), 375-498 (SAKT…DRML), and 502-632 (MGTV…NTVL). The Cell attachment site signature appears at 642–644 (RGD).

In terms of assembly, binds to type I, II, and IV collagens. Post-translationally, gamma-carboxylation is controversial. Gamma-carboxyglutamated; gamma-carboxyglutamate residues are formed by vitamin K dependent carboxylation; this may be required for calcium binding. According to a more recent report, does not contain vitamin K-dependent gamma-carboxyglutamate residues. In terms of processing, the EMI domain contains 2 expected intradomain disulfide bridges (Cys-49-Cys85 and Cys-84-Cys-97) and one unusual interdomain disulfide bridge to the second FAS1 domain (Cys-74-Cys-339). This arrangement violates the predicted disulfide bridge pattern of an EMI domain. As to expression, expressed in heart, kidney, liver, skeletal muscle, testis, thyroid and uterus.

It is found in the secreted. The protein resides in the extracellular space. It localises to the extracellular matrix. Plays a role in cell adhesion. May play a role in cell-collagen interactions. In Mus musculus (Mouse), this protein is Transforming growth factor-beta-induced protein ig-h3 (Tgfbi).